Consider the following 404-residue polypeptide: F-box only protein 12 (404 aa).

Residues 1–44 (MKNSIPIDLIYEILSRLPAKSVARCRCVSKRWRSILRHQVFTEL) form the F-box domain. Residues 383–403 (LAILFCLFFLLFNYLIRLCWV) form a helical membrane-spanning segment.

It localises to the membrane. In Arabidopsis thaliana (Mouse-ear cress), this protein is F-box only protein 12 (FBX12).